We begin with the raw amino-acid sequence, 226 residues long: V-type proton ATPase subunit E 2 (226 aa).

It belongs to the V-ATPase E subunit family. As to quaternary structure, V-ATPase is a heteromultimeric enzyme made up of two complexes: the ATP-hydrolytic V1 complex and the proton translocation V0 complex. The V1 complex consists of three catalytic AB heterodimers that form a heterohexamer, three peripheral stalks each consisting of EG heterodimers, one central rotor including subunits D and F, and the regulatory subunits C and H. The proton translocation complex V0 consists of the proton transport subunit a, a ring of proteolipid subunits c9c'', rotary subunit d, subunits e and f, and the accessory subunits ATP6AP1/Ac45 and ATP6AP2/PRR. As to expression, testis specific.

In terms of biological role, subunit of the V1 complex of vacuolar(H+)-ATPase (V-ATPase), a multisubunit enzyme composed of a peripheral complex (V1) that hydrolyzes ATP and a membrane integral complex (V0) that translocates protons. V-ATPase is responsible for acidifying and maintaining the pH of intracellular compartments and in some cell types, is targeted to the plasma membrane, where it is responsible for acidifying the extracellular environment. The chain is V-type proton ATPase subunit E 2 (ATP6V1E2) from Homo sapiens (Human).